The chain runs to 610 residues: Estrogen receptor beta-2 (610 aa).

The segment at 1 to 170 is modulating; sequence MSSSTGPAPA…GILGKGDTHF (170 aa). NR C4-type zinc fingers lie at residues 171-191 and 207-231; these read CAVC…CEGC and CPAT…LRKC. Positions 171-236 form a DNA-binding region, nuclear receptor; that stretch reads CAVCHDYASG…RLRKCYEVGM (66 aa). Residues 302–538 form the NR LBD domain; the sequence is SPEQLVNCIL…DLLLEMLDAN (237 aa). Residues 566-596 form a disordered region; that stretch reads HTSKQQPALKESNQDTRHSPQAEGTVDKTLH. Residues 577 to 596 show a composition bias toward basic and acidic residues; the sequence is SNQDTRHSPQAEGTVDKTLH.

It belongs to the nuclear hormone receptor family. NR3 subfamily. As to quaternary structure, binds DNA as a homodimer. Can form a heterodimer with ER-alpha. As to expression, predominantly expressed in pituitary, telencephalon and hypothalamus as well as in the liver.

It is found in the nucleus. In terms of biological role, binds estrogens with an affinity similar to that of ER-alpha, and activates expression of reporter genes containing estrogen response elements (ERE) in an estrogen-dependent manner. The chain is Estrogen receptor beta-2 (esr2b) from Carassius auratus (Goldfish).